The sequence spans 474 residues: DNA damage checkpoint control protein MEC3 (474 aa).

Residue Ser-452 is modified to Phosphoserine.

This sequence belongs to the MEC3 family. As to quaternary structure, component of the checkpoint clamp complex composed of DDC1, MEC3 and RAD17. The interaction with MEC3 is performed in a RAD17-dependent manner. The checkpoint clamp complex loads onto DNA. Interacts with the DNA polymerase zeta subunit REV7. Also forms a heterotrimer with 2 RAD17 subunits. Interacts with SET1.

It localises to the nucleus. Functionally, component of the checkpoint clamp complex involved in the surveillance mechanism that allows the DNA repair pathways to act to restore the integrity of the DNA prior to DNA synthesis or separation of the replicated chromosomes. Associates with sites of DNA damage and modulates the MEC1 signaling pathway and the activation of RAD53 in response to DNA damage at phase G1. The complex also physically regulates DNA polymerase zeta-dependent mutagenesis by controlling the access of polymerase zeta to damaged DNA. In Saccharomyces cerevisiae (strain ATCC 204508 / S288c) (Baker's yeast), this protein is DNA damage checkpoint control protein MEC3 (MEC3).